The sequence spans 312 residues: Ribosomal protein L11 methyltransferase (312 aa).

S-adenosyl-L-methionine contacts are provided by Thr-164, Gly-185, Asp-207, and Asn-249.

Belongs to the methyltransferase superfamily. PrmA family.

It is found in the cytoplasm. The enzyme catalyses L-lysyl-[protein] + 3 S-adenosyl-L-methionine = N(6),N(6),N(6)-trimethyl-L-lysyl-[protein] + 3 S-adenosyl-L-homocysteine + 3 H(+). Its function is as follows. Methylates ribosomal protein L11. This chain is Ribosomal protein L11 methyltransferase, found in Clostridium novyi (strain NT).